Consider the following 75-residue polypeptide: U6-lycotoxin-Ls1d (75 aa).

Residues 1-21 form the signal peptide; sequence MKLLLFTALVLVVISLVEVEA. Residues 22–25 constitute a propeptide that is removed on maturation; that stretch reads ENER.

This sequence belongs to the neurotoxin 19 (CSTX) family. 06 (U6-Lctx) subfamily. Contains 4 disulfide bonds. As to expression, expressed by the venom gland.

Its subcellular location is the secreted. The polypeptide is U6-lycotoxin-Ls1d (Lycosa singoriensis (Wolf spider)).